Consider the following 174-residue polypeptide: Matrix protein (174 aa).

As to quaternary structure, homomultimer. Interacts with nucleoprotein and with the cytoplasmic domain of glycoprotein.

Its subcellular location is the virion membrane. The protein resides in the host endomembrane system. In terms of biological role, plays a major role in assembly and budding of virion. Completely covers the ribonucleoprotein coil and keep it in condensed bullet-shaped form. Inhibits viral transcription and stimulates replication. The sequence is that of Matrix protein (M) from Hordeum vulgare (Barley).